Here is a 673-residue protein sequence, read N- to C-terminus: UvrABC system protein B (673 aa).

A Helicase ATP-binding domain is found at 26-415 (EGLEDGLAHQ…GDVVDQVVRP (390 aa)). 39–46 (GVTGSGKT) serves as a coordination point for ATP. The short motif at 92 to 115 (YYDYYQPEAYVPSSDTFIEKDASV) is the Beta-hairpin element. Residues 431-597 (QVDDLLSEIR…GLNKKVVDIL (167 aa)) enclose the Helicase C-terminal domain. Residues 608-627 (AKGRGKSRPIVEPDNVPMDM) are disordered. The region spanning 633 to 668 (QQKIHELEGLMMQHAQNLEFEEAAQIRDQLHQLREL) is the UVR domain.

Belongs to the UvrB family. In terms of assembly, forms a heterotetramer with UvrA during the search for lesions. Interacts with UvrC in an incision complex.

Its subcellular location is the cytoplasm. Functionally, the UvrABC repair system catalyzes the recognition and processing of DNA lesions. A damage recognition complex composed of 2 UvrA and 2 UvrB subunits scans DNA for abnormalities. Upon binding of the UvrA(2)B(2) complex to a putative damaged site, the DNA wraps around one UvrB monomer. DNA wrap is dependent on ATP binding by UvrB and probably causes local melting of the DNA helix, facilitating insertion of UvrB beta-hairpin between the DNA strands. Then UvrB probes one DNA strand for the presence of a lesion. If a lesion is found the UvrA subunits dissociate and the UvrB-DNA preincision complex is formed. This complex is subsequently bound by UvrC and the second UvrB is released. If no lesion is found, the DNA wraps around the other UvrB subunit that will check the other stand for damage. The sequence is that of UvrABC system protein B from Escherichia coli O6:H1 (strain CFT073 / ATCC 700928 / UPEC).